The chain runs to 122 residues: Serum amyloid A-1 protein (122 aa).

The N-terminal stretch at 1 to 18 (MKPFVAIIFCFLILGVDS) is a signal peptide. Residues 19–45 (QRWFQFMKEAGQGTRDMWRAYTDMREA) are important for amyloid formation. Residues 100–122 (ANEWGRSGKDPNFFRPPGLPSKY) are disordered.

This sequence belongs to the SAA family. Homohexamer; dimer of trimers. Can form amyloid fibrils after partial proteolysis; the native, undenatured protein does not form amyloid fibrils (in vitro). Apolipoprotein of the HDL complex. Binds to heparin. In terms of tissue distribution, detected in liver, spleen and kidney.

The protein resides in the secreted. Its function is as follows. Major acute phase protein. This chain is Serum amyloid A-1 protein (SAA1), found in Mesocricetus auratus (Golden hamster).